The primary structure comprises 90 residues: Progonadoliberin-3 (90 aa).

A signal peptide spans 1–23 (MEANSRVMVRVLLLALVVQVTLS). Residue Gln24 is modified to Pyrrolidone carboxylic acid. At Gly33 the chain carries Glycine amide. The segment at 56 to 90 (LPEEASAQTQERLRPYNVINDDSSHFDRKKRSPNK) is disordered.

Belongs to the GnRH family.

Its subcellular location is the secreted. Functionally, stimulates the secretion of gonadotropins. In Dicentrarchus labrax (European seabass), this protein is Progonadoliberin-3 (gnrh3).